A 420-amino-acid polypeptide reads, in one-letter code: Serine--tRNA ligase (420 aa).

227-229 contributes to the L-serine binding site; that stretch reads TSE. Residues 258–260 and valine 274 contribute to the ATP site; that span reads RRE. Glutamate 281 lines the L-serine pocket. 345–348 is a binding site for ATP; sequence ELTS. Position 380 (threonine 380) interacts with L-serine.

The protein belongs to the class-II aminoacyl-tRNA synthetase family. Type-1 seryl-tRNA synthetase subfamily. In terms of assembly, homodimer. The tRNA molecule binds across the dimer.

The protein localises to the cytoplasm. The enzyme catalyses tRNA(Ser) + L-serine + ATP = L-seryl-tRNA(Ser) + AMP + diphosphate + H(+). The catalysed reaction is tRNA(Sec) + L-serine + ATP = L-seryl-tRNA(Sec) + AMP + diphosphate + H(+). It participates in aminoacyl-tRNA biosynthesis; selenocysteinyl-tRNA(Sec) biosynthesis; L-seryl-tRNA(Sec) from L-serine and tRNA(Sec): step 1/1. Functionally, catalyzes the attachment of serine to tRNA(Ser). Is also able to aminoacylate tRNA(Sec) with serine, to form the misacylated tRNA L-seryl-tRNA(Sec), which will be further converted into selenocysteinyl-tRNA(Sec). This is Serine--tRNA ligase from Nocardia farcinica (strain IFM 10152).